A 70-amino-acid chain; its full sequence is DNA-directed RNA polymerase subunit epsilon (70 aa).

This sequence belongs to the RNA polymerase subunit epsilon family. As to quaternary structure, RNAP is composed of a core of 2 alpha, a beta and a beta' subunit. The core is associated with a delta subunit, and at least one of epsilon or omega. When a sigma factor is associated with the core the holoenzyme is formed, which can initiate transcription.

The enzyme catalyses RNA(n) + a ribonucleoside 5'-triphosphate = RNA(n+1) + diphosphate. Its function is as follows. A non-essential component of RNA polymerase (RNAP). This Bacillus cereus (strain ZK / E33L) protein is DNA-directed RNA polymerase subunit epsilon.